We begin with the raw amino-acid sequence, 127 residues long: Fluoride-specific ion channel FluC 2 (127 aa).

4 helical membrane passes run 4-24, 31-51, 62-82, and 94-114; these read IIAITGFAMLGGGLREGLSLL, FWITCLINIVGAFVLSLITNL, IVIGMSVGFVGSFTTFSTFTF, and VLALSYVAASLGLGLLAGLAG. Residues G72 and T75 each contribute to the Na(+) site.

This sequence belongs to the fluoride channel Fluc/FEX (TC 1.A.43) family.

The protein localises to the cell membrane. It catalyses the reaction fluoride(in) = fluoride(out). With respect to regulation, na(+) is not transported, but it plays an essential structural role and its presence is essential for fluoride channel function. Functionally, fluoride-specific ion channel. Important for reducing fluoride concentration in the cell, thus reducing its toxicity. The polypeptide is Fluoride-specific ion channel FluC 2 (Lactiplantibacillus plantarum (strain ATCC BAA-793 / NCIMB 8826 / WCFS1) (Lactobacillus plantarum)).